A 1942-amino-acid polypeptide reads, in one-letter code: GREB1-like protein (1942 aa).

4 disordered regions span residues 76-101, 235-306, 325-373, and 1123-1256; these read SSNSVEDMDDEDDSDTSSPPLPYLQG, PFSN…GTKT, MDGR…HRSW, and TKTA…RTQV. Residues 81 to 90 show a composition bias toward acidic residues; sequence EDMDDEDDSD. Low complexity predominate over residues 237–253; it reads SNSASSSKPSSSSSLSS. A compositionally biased stretch (polar residues) spans 338–362; it reads NPLSTPSHGYRTTETGDSPASTAMS. A compositionally biased stretch (basic and acidic residues) spans 1127–1155; that stretch reads TSREERPREGERSSGETAEHDDLPMELER. Residues 1158-1171 show a composition bias toward low complexity; it reads SNASAATRTSGSTT. A compositionally biased stretch (polar residues) spans 1172–1202; it reads ENGVSSSSILDKPSSQSDPCGSRTMMDSCSS. Residues 1212 to 1248 show a composition bias toward low complexity; that stretch reads SQAPSSSSTSSFSSASSSSSSSSSPAAQRPSQSTQAP. A helical membrane pass occupies residues 1861 to 1881; sequence GVIFSGLLLYLCDSFVVSSLL.

The protein belongs to the GREB1 family.

It is found in the membrane. Functionally, plays a major role in early metanephros development. In Danio rerio (Zebrafish), this protein is GREB1-like protein (greb1l).